The following is a 243-amino-acid chain: Carboxy-S-adenosyl-L-methionine synthase (243 aa).

Residues Tyr-40, 65-67 (GCS), 90-91 (DN), 118-119 (DI), Asn-133, and Arg-200 each bind S-adenosyl-L-methionine.

It belongs to the class I-like SAM-binding methyltransferase superfamily. Cx-SAM synthase family. Homodimer.

It catalyses the reaction prephenate + S-adenosyl-L-methionine = carboxy-S-adenosyl-L-methionine + 3-phenylpyruvate + H2O. Functionally, catalyzes the conversion of S-adenosyl-L-methionine (SAM) to carboxy-S-adenosyl-L-methionine (Cx-SAM). This is Carboxy-S-adenosyl-L-methionine synthase from Shewanella sp. (strain ANA-3).